We begin with the raw amino-acid sequence, 370 residues long: Probable dual-specificity RNA methyltransferase RlmN (370 aa).

Glu91 functions as the Proton acceptor in the catalytic mechanism. Residues 97–329 (QHYGLSVCVT…KKNGVNCVVR (233 aa)) enclose the Radical SAM core domain. Cys104 and Cys340 form a disulfide bridge. [4Fe-4S] cluster-binding residues include Cys111, Cys115, and Cys118. Residues 163–164 (GE), Ser195, 218–220 (SLH), and Asn296 each bind S-adenosyl-L-methionine. Cys340 functions as the S-methylcysteine intermediate in the catalytic mechanism.

It belongs to the radical SAM superfamily. RlmN family. The cofactor is [4Fe-4S] cluster.

Its subcellular location is the cytoplasm. The catalysed reaction is adenosine(2503) in 23S rRNA + 2 reduced [2Fe-2S]-[ferredoxin] + 2 S-adenosyl-L-methionine = 2-methyladenosine(2503) in 23S rRNA + 5'-deoxyadenosine + L-methionine + 2 oxidized [2Fe-2S]-[ferredoxin] + S-adenosyl-L-homocysteine. It catalyses the reaction adenosine(37) in tRNA + 2 reduced [2Fe-2S]-[ferredoxin] + 2 S-adenosyl-L-methionine = 2-methyladenosine(37) in tRNA + 5'-deoxyadenosine + L-methionine + 2 oxidized [2Fe-2S]-[ferredoxin] + S-adenosyl-L-homocysteine. In terms of biological role, specifically methylates position 2 of adenine 2503 in 23S rRNA and position 2 of adenine 37 in tRNAs. The protein is Probable dual-specificity RNA methyltransferase RlmN of Streptococcus suis (strain 98HAH33).